Reading from the N-terminus, the 348-residue chain is Protein pelota homolog (348 aa).

The protein belongs to the eukaryotic release factor 1 family. Pelota subfamily. In terms of assembly, monomer. It depends on a divalent metal cation as a cofactor.

It localises to the cytoplasm. May function in recognizing stalled ribosomes, interact with stem-loop structures in stalled mRNA molecules, and effect endonucleolytic cleavage of the mRNA. May play a role in the release non-functional ribosomes and degradation of damaged mRNAs. Has endoribonuclease activity. This chain is Protein pelota homolog, found in Methanococcus vannielii (strain ATCC 35089 / DSM 1224 / JCM 13029 / OCM 148 / SB).